The following is a 388-amino-acid chain: UDP-galactose transporter senju (388 aa).

10 helical membrane-spanning segments follow: residues 13 to 33, 46 to 66, 84 to 104, 113 to 133, 142 to 162, 202 to 222, 236 to 256, 276 to 296, 309 to 329, and 331 to 351; these read LTFV…IFVT, TVTV…CLYC, VLGL…LAFV, TYYL…QIIF, WISL…FGSF, FSLS…AGVY, IFVQ…VILL, FSVL…SFFL, ALEL…PIYM, and TALA…SPVV.

This sequence belongs to the nucleotide-sugar transporter family.

It localises to the golgi apparatus membrane. In terms of biological role, UDP-galactose transporter involved in the synthesis of galactose-containing glycans. Plays a role in quiescence of the innate immune response, possibly by regulating glycosylation of the Toll pathway ligand spz. This Drosophila melanogaster (Fruit fly) protein is UDP-galactose transporter senju.